The chain runs to 402 residues: Phosphoglycerate kinase (402 aa).

Substrate-binding positions include 24–26 (DFN), Arg40, 63–66 (HFGR), Arg122, and Arg155. Residues Lys206, Gly297, Glu328, and 357–360 (GGDS) contribute to the ATP site.

The protein belongs to the phosphoglycerate kinase family. As to quaternary structure, monomer.

It localises to the cytoplasm. It catalyses the reaction (2R)-3-phosphoglycerate + ATP = (2R)-3-phospho-glyceroyl phosphate + ADP. It participates in carbohydrate degradation; glycolysis; pyruvate from D-glyceraldehyde 3-phosphate: step 2/5. This Synechococcus sp. (strain RCC307) protein is Phosphoglycerate kinase.